The chain runs to 445 residues: MGTSRYFVRKTTIPPPKRPRRIHVSPCHDTPILFGDEVKRCPWGHLAYGGSCLQSITLRDSETSMEELLPHDVIEYHIMVRLDVKTLLKFKSVSKQWMSTIQSPSFQERQLIHHLSQSSGDPHVLLVSLYDPCARQQDPSISSFEALRTFLVESSAASVQIPTPWEDKLYFVCNTSCDGLICLFSFYELPSIVVNPTTRWHRTFPKCNYQLVAADKGERHECFKVACPTPGFGKDKISGTYKPVWLYNSAELDLNDKPTTCEVFDFATNAWRYVFPASPHLILHTQDPVYVDGSLHWFTALSHEGETMVLSLDLHSETFQVISKAPFLNVSDEYYIVMCNLGDRLCVSEQKWPNQVIWSLDDSDHKTWKQIYSIDLIITSSLFFSAIFAFTPLAVLDKDKLLFYDSTHGDAFLTHDPDTKSYDLPYTSNRCATVVCYFPSLISIL.

Residues 64–112 (SMEELLPHDVIEYHIMVRLDVKTLLKFKSVSKQWMSTIQSPSFQERQLI) enclose the F-box domain.

This Arabidopsis thaliana (Mouse-ear cress) protein is F-box protein At5g10340.